We begin with the raw amino-acid sequence, 590 residues long: Acetolactate synthase large subunit (590 aa).

Glutamate 61 contributes to the thiamine diphosphate binding site. FAD-binding positions include arginine 163, 271–292 (HGTAYANFAVSECDLLIALGAR), and 314–333 (DIDPAEVGKNRIPQVAIVGD). The interval 405–484 (QHQMWSAQFL…IKIVIINNRW (80 aa)) is thiamine pyrophosphate binding. 2 residues coordinate Mg(2+): aspartate 455 and asparagine 482.

The protein belongs to the TPP enzyme family. Dimer of large and small chains. The cofactor is Mg(2+). Thiamine diphosphate is required as a cofactor.

It localises to the plastid. It is found in the chloroplast. The catalysed reaction is 2 pyruvate + H(+) = (2S)-2-acetolactate + CO2. The protein operates within amino-acid biosynthesis; L-isoleucine biosynthesis; L-isoleucine from 2-oxobutanoate: step 1/4. It functions in the pathway amino-acid biosynthesis; L-valine biosynthesis; L-valine from pyruvate: step 1/4. The protein is Acetolactate synthase large subunit (ilvB) of Porphyra purpurea (Red seaweed).